A 454-amino-acid polypeptide reads, in one-letter code: CCA-adding enzyme (454 aa).

2 residues coordinate ATP: S51 and K54. CTP is bound by residues S51 and K54. Residues D63, D65, and D118 each coordinate Mg(2+). Residues H141, K161, and Y170 each contribute to the ATP site. Residues H141, K161, and Y170 each coordinate CTP.

It belongs to the tRNA nucleotidyltransferase/poly(A) polymerase family. Archaeal CCA-adding enzyme subfamily. In terms of assembly, homodimer. The cofactor is Mg(2+).

It catalyses the reaction a tRNA precursor + 2 CTP + ATP = a tRNA with a 3' CCA end + 3 diphosphate. The catalysed reaction is a tRNA with a 3' CCA end + 2 CTP + ATP = a tRNA with a 3' CCACCA end + 3 diphosphate. In terms of biological role, catalyzes the addition and repair of the essential 3'-terminal CCA sequence in tRNAs without using a nucleic acid template. Adds these three nucleotides in the order of C, C, and A to the tRNA nucleotide-73, using CTP and ATP as substrates and producing inorganic pyrophosphate. tRNA 3'-terminal CCA addition is required both for tRNA processing and repair. Also involved in tRNA surveillance by mediating tandem CCA addition to generate a CCACCA at the 3' terminus of unstable tRNAs. While stable tRNAs receive only 3'-terminal CCA, unstable tRNAs are marked with CCACCA and rapidly degraded. The sequence is that of CCA-adding enzyme from Methanothermobacter thermautotrophicus (strain ATCC 29096 / DSM 1053 / JCM 10044 / NBRC 100330 / Delta H) (Methanobacterium thermoautotrophicum).